Reading from the N-terminus, the 151-residue chain is UPF0336 protein Franean1_6066 (151 aa).

The MaoC-like domain maps to 8 to 127 (VGRSYTSDVP…NEVLVTSYEF (120 aa)).

It belongs to the UPF0336 family.

The polypeptide is UPF0336 protein Franean1_6066 (Parafrankia sp. (strain EAN1pec)).